We begin with the raw amino-acid sequence, 438 residues long: Adenosylhomocysteinase (438 aa).

The substrate site is built by Thr-64, Asp-139, and Glu-164. Position 165–167 (Thr-165–Thr-167) interacts with NAD(+). Residues Lys-194 and Asp-198 each coordinate substrate. NAD(+)-binding positions include Asn-199, Gly-228–Gly-233, Glu-251, Asn-286, Ile-307–His-309, and Asn-352.

It belongs to the adenosylhomocysteinase family. NAD(+) serves as cofactor.

The protein localises to the cytoplasm. It carries out the reaction S-adenosyl-L-homocysteine + H2O = L-homocysteine + adenosine. The protein operates within amino-acid biosynthesis; L-homocysteine biosynthesis; L-homocysteine from S-adenosyl-L-homocysteine: step 1/1. May play a key role in the regulation of the intracellular concentration of adenosylhomocysteine. The chain is Adenosylhomocysteinase from Coxiella burnetii (strain CbuK_Q154) (Coxiella burnetii (strain Q154)).